The sequence spans 48 residues: uncharacterized protein (48 aa).

The protein belongs to the ELIP/psbS family.

The protein localises to the plastid. It localises to the chloroplast. Functionally, possible role in chlorophyll and/or carotenoid binding. This is an uncharacterized protein from Pyropia yezoensis (Susabi-nori).